We begin with the raw amino-acid sequence, 429 residues long: Fumarylacetoacetase (429 aa).

D139 is a binding site for Ca(2+). H146 (proton acceptor) is an active-site residue. R155 contacts substrate. Ca(2+) contacts are provided by E212, E214, and D246. D246 is a binding site for Mg(2+). Q253 is a binding site for substrate. Residues K266 and T270 each coordinate Mg(2+). Substrate is bound at residue T363.

It belongs to the FAH family. Ca(2+) serves as cofactor. Mg(2+) is required as a cofactor.

It catalyses the reaction 4-fumarylacetoacetate + H2O = acetoacetate + fumarate + H(+). It participates in amino-acid degradation; L-phenylalanine degradation; acetoacetate and fumarate from L-phenylalanine: step 6/6. Its function is as follows. Converts fumarylacetoacetate to acetoacetate and fumarate. Involved in tyrosine catabolic pathway. Catalyzes the final step in the tyrosine degradation pathway. This Oryza sativa subsp. japonica (Rice) protein is Fumarylacetoacetase.